Here is a 370-residue protein sequence, read N- to C-terminus: Selenide, water dikinase 2 (370 aa).

Selenocysteine 24 is a catalytic residue. Selenocysteine 24 is a non-standard amino acid (selenocysteine). ATP contacts are provided by residues lysine 27, 55–57 (GMD), aspartate 76, and aspartate 99. Aspartate 57 provides a ligand contact to Mg(2+). Mg(2+)-binding residues include aspartate 99 and aspartate 258.

The protein belongs to the selenophosphate synthase 1 family. Class I subfamily. Homodimer. The cofactor is Mg(2+). As to expression, first expressed in the midgut anlagen with subsequent expression in a variety of tissues including the gut and nervous system.

The enzyme catalyses hydrogenselenide + ATP + H2O = selenophosphate + AMP + phosphate + 2 H(+). Its function is as follows. Synthesizes selenophosphate from selenide and ATP. In Drosophila melanogaster (Fruit fly), this protein is Selenide, water dikinase 2 (Sps2).